A 164-amino-acid chain; its full sequence is Putative 4-hydroxy-4-methyl-2-oxoglutarate aldolase (164 aa).

Substrate-binding positions include 74–77 (GGNL) and Arg96. Asp97 is a binding site for a divalent metal cation.

It belongs to the class II aldolase/RraA-like family. Homotrimer. A divalent metal cation is required as a cofactor.

It catalyses the reaction 4-hydroxy-4-methyl-2-oxoglutarate = 2 pyruvate. It carries out the reaction oxaloacetate + H(+) = pyruvate + CO2. Catalyzes the aldol cleavage of 4-hydroxy-4-methyl-2-oxoglutarate (HMG) into 2 molecules of pyruvate. Also contains a secondary oxaloacetate (OAA) decarboxylase activity due to the common pyruvate enolate transition state formed following C-C bond cleavage in the retro-aldol and decarboxylation reactions. In Thermus thermophilus (strain ATCC BAA-163 / DSM 7039 / HB27), this protein is Putative 4-hydroxy-4-methyl-2-oxoglutarate aldolase.